The following is a 317-amino-acid chain: Olfactory receptor 8B3 (317 aa).

Topologically, residues 1–32 (MISMLAGNGSSVTEFVLAGLTDRPELQLPLFY) are extracellular. Asn8 carries N-linked (GlcNAc...) asparagine glycosylation. The chain crosses the membrane as a helical span at residues 33–53 (LFLIIYIITVVGNLGLIILIG). Topologically, residues 54-59 (LNPHLH) are cytoplasmic. Residues 60 to 80 (TPMYYFLFNLSFIDLCYSSVF) traverse the membrane as a helical segment. Residues 81 to 97 (SPKMLINFVSEKNSISY) lie on the Extracellular side of the membrane. A helical transmembrane segment spans residues 98 to 118 (AGCMTQLFLFLFFVISECYML). Residues 119 to 136 (TSMAYDRYVAICNPLLYK) are Cytoplasmic-facing. The chain crosses the membrane as a helical span at residues 137–157 (VTMSPQICSVISFAAYGMGFA). At 158–199 (GSSAHTGCMLRLTFCNVNVINHYLCDILPLLQLSCTSTYVNE) the chain is on the extracellular side. The chain crosses the membrane as a helical span at residues 200-220 (VVVLIVVGINITVPSFTILIS). Over 221–242 (YVFILANILNIKSTQGRAKAFS) the chain is Cytoplasmic. The helical transmembrane segment at 243-263 (TCSSHIMAISLFFGSAAFMYL) threads the bilayer. Over 264–274 (KYSSGSMEQGK) the chain is Extracellular. Residues 275–294 (ISSVFYTNVGPMLNPLIYSL) traverse the membrane as a helical segment. Residues 295-317 (RNKDVKVALRKSLIKFREKTDFN) lie on the Cytoplasmic side of the membrane.

It belongs to the G-protein coupled receptor 1 family.

The protein resides in the cell membrane. Its function is as follows. Odorant receptor. The chain is Olfactory receptor 8B3 from Mus musculus (Mouse).